The primary structure comprises 895 residues: Procollagen lysyl hydroxylase and glycosyltransferase (895 aa).

Residues 1 to 194 (MISRTYVINL…PSDEFIPIMH (194 aa)) are lysyl hydroxylase region. Residues 537–895 (YYFYISGDCI…KRYILVSFVN (359 aa)) are glucosyl transferase region. Residues 805 to 895 (DINLAFVVKY…KRYILVSFVN (91 aa)) enclose the Fe2OG dioxygenase domain. His-825, Asp-827, and His-877 together coordinate Fe cation. The active site involves Arg-887.

Fe cation is required as a cofactor. Requires L-ascorbate as cofactor.

It catalyses the reaction L-lysyl-[collagen] + 2-oxoglutarate + O2 = (5R)-5-hydroxy-L-lysyl-[collagen] + succinate + CO2. Functionally, displays two enzymatic activities involved in procollagen processing. Forms hydroxylysine residues in -Xaa-Lys-Gly- sequences in collagens. These hydroxylysines are subsequentially glucosylated by a glucosyltransferase activity. Collagen post-translationally modified is detected in mimivirus virion. The polypeptide is Procollagen lysyl hydroxylase and glycosyltransferase (Acanthamoeba polyphaga (Amoeba)).